Consider the following 273-residue polypeptide: Acetyl-coenzyme A carboxylase carboxyl transferase subunit alpha (273 aa).

A CoA carboxyltransferase C-terminal domain is found at 1–244; the sequence is MKKATQSKAW…KVVLKQALDE (244 aa).

It belongs to the AccA family. As to quaternary structure, acetyl-CoA carboxylase is a heterohexamer composed of biotin carboxyl carrier protein (AccB), biotin carboxylase (AccC) and two subunits each of ACCase subunit alpha (AccA) and ACCase subunit beta (AccD).

The protein localises to the cytoplasm. It carries out the reaction N(6)-carboxybiotinyl-L-lysyl-[protein] + acetyl-CoA = N(6)-biotinyl-L-lysyl-[protein] + malonyl-CoA. It functions in the pathway lipid metabolism; malonyl-CoA biosynthesis; malonyl-CoA from acetyl-CoA: step 1/1. In terms of biological role, component of the acetyl coenzyme A carboxylase (ACC) complex. First, biotin carboxylase catalyzes the carboxylation of biotin on its carrier protein (BCCP) and then the CO(2) group is transferred by the carboxyltransferase to acetyl-CoA to form malonyl-CoA. In Acinetobacter baumannii (strain ACICU), this protein is Acetyl-coenzyme A carboxylase carboxyl transferase subunit alpha.